Consider the following 386-residue polypeptide: Coproporphyrinogen-III oxidase 1, chloroplastic (386 aa).

The N-terminal 48 residues, 1-48, are a transit peptide targeting the chloroplast; sequence MASHSSTLLSSPTFAPFSSHRLHYSPNPSTLRFSRPIRNKPNLALRCS. The important for dimerization stretch occupies residues 125–134; that stretch reads VLQDGNVFEK. Substrate is bound at residue Ser174. His188 functions as the Proton donor in the catalytic mechanism. Substrate contacts are provided by residues 190–192 and 344–349; these read NYR and GGRIES. The tract at residues 326 to 361 is important for dimerization; that stretch reads YVEFNLVYDRGTTFGLKTGGRIESILVSLPLSARWE.

This sequence belongs to the aerobic coproporphyrinogen-III oxidase family. As to quaternary structure, homodimer. In terms of tissue distribution, expressed in cotyledons, leaves and roots.

The protein resides in the plastid. The protein localises to the chloroplast. The catalysed reaction is coproporphyrinogen III + O2 + 2 H(+) = protoporphyrinogen IX + 2 CO2 + 2 H2O. It participates in porphyrin-containing compound metabolism; protoporphyrin-IX biosynthesis; protoporphyrinogen-IX from coproporphyrinogen-III (O2 route): step 1/1. Its pathway is porphyrin-containing compound metabolism; chlorophyll biosynthesis. Key enzyme in heme biosynthesis. Catalyzes the oxidative decarboxylation of propionic acid side chains of rings A and B of coproporphyrinogen III. This Arabidopsis thaliana (Mouse-ear cress) protein is Coproporphyrinogen-III oxidase 1, chloroplastic (CPX1).